Consider the following 432-residue polypeptide: Competence protein ComFA (432 aa).

Zn(2+)-binding residues include cysteine 40, cysteine 43, cysteine 60, and cysteine 63. The Helicase ATP-binding domain occupies 107–257 (LQAVDKQKPT…RLGELKRLNL (151 aa)). 120–127 (AVTGAGKT) contacts ATP. Residues 205 to 208 (DEVD) carry the DEAD box motif. The Helicase C-terminal domain maps to 289 to 432 (KLKSYIEKQR…IQMMNKEAGL (144 aa)).

Belongs to the DEAD box helicase family. Monomer and dimer in solution. Interacts with DprA and ComFC; ComFA-ComFC form rings about 150 Angstroms in diameter with apparent 6-fold symmetry. Zn(2+) is required as a cofactor.

The protein localises to the cytoplasm. Functionally, involved in transformation (genetic competence for DNA uptake). DNA uptake is energy dependent, this protein may provide the driving force for DNA uptake. Does not have helicase activity, translocates on single-stranded (ss)DNA in a 5'-3' direction in an ATP-dependent manner, but does not unwind double-stranded (ds)DNA (tested with 5'- and 3'-overhang dsDNA). ATP hydrolysis causes the release of ssDNA from ComFA. A ssDNA-stimulated ATPase; dsDNA does not stimulate ATPase. ATP hydrolysis causes the release of ssDNA from ComFA. ComFC has no effect on ATPase activity. Binds ssDNA but only very poorly to dsDNA in the absence of ATP. Binding to ssDNA does not require free DNA ends. The protein is Competence protein ComFA of Streptococcus pneumoniae (strain ATCC BAA-255 / R6).